Reading from the N-terminus, the 861-residue chain is MRVKEKYQHLWRWGWKWGTMLLGILMICSATEKLWVTVYYGVPVWKEATTTLFCASDAKAYDTEVHNVWATHACVPTDPNPQEVVLVNVTENFNMWKNDMVEQMHEDIISLWDQSLKPCVKLTPLCVSLKCTDLGNATNTNSSNTNSSSGEMMMEKGEIKNCSFNISTSIRGKVQKEYAFFYKLDIIPIDNDTTSYTLTSCNTSVITQACPKVSFEPIPIHYCAPAGFAILKCNNKTFNGTGPCTNVSTVQCTHGIRPVVSTQLLLNGSLAEEEVVIRSANFTDNAKTIIVQLNQSVEINCTRPNNNTRKSIRIQRGPGRAFVTIGKIGNMRQAHCNISRAKWNATLKQIASKLREQFGNNKTIIFKQSSGGDPEIVTHSFNCGGEFFYCNSTQLFNSTWFNSTWSTEGSNNTEGSDTITLPCRIKQFINMWQEVGKAMYAPPISGQIRCSSNITGLLLTRDGGNNNNGSEIFRPGGGDMRDNWRSELYKYKVVKIEPLGVAPTKAKRRVVQREKRAVGIGALFLGFLGAAGSTMGARSMTLTVQARQLLSGIVQQQNNLLRAIEAQQHLLQLTVWGIKQLQARILAVERYLKDQQLLGIWGCSGKLICTTAVPWNASWSNKSLEQIWNNMTWMEWDREINNYTSLIHSLIEESQNQQEKNEQELLELDKWASLWNWFNITNWLWYIKIFIMIVGGLVGLRIVFAVLSIVNRVRQGYSPLSFQTHLPTPRGPDRPEGIEEEGGERDRDRSIRLVNGSLALIWDDLRSLCLFSYHRLRDLLLIVTRIVELLGRRGWEALKYWWNLLQYWSQELKNSAVSLLNATAIAVAEGTDRVIEVVQGACRAIRHIPRRIRQGLERILL.

Positions 1–32 (MRVKEKYQHLWRWGWKWGTMLLGILMICSATE) are cleaved as a signal peptide. Topologically, residues 33–689 (KLWVTVYYGV…ITNWLWYIKI (657 aa)) are extracellular. Cysteine 54 and cysteine 74 are joined by a disulfide. 6 N-linked (GlcNAc...) asparagine; by host glycosylation sites follow: asparagine 88, asparagine 136, asparagine 141, asparagine 146, asparagine 161, and asparagine 165. 5 disulfide bridges follow: cysteine 119–cysteine 210, cysteine 126–cysteine 201, cysteine 131–cysteine 162, cysteine 223–cysteine 252, and cysteine 233–cysteine 244. Residues 131–161 (CTDLGNATNTNSSNTNSSSGEMMMEKGEIKN) are V1. The interval 162-201 (CSFNISTSIRGKVQKEYAFFYKLDIIPIDNDTTSYTLTSC) is V2. Residues 184–186 (LDI) carry the Putative binding site to alpha-4/beta-7 integrin motif. N-linked (GlcNAc...) asparagine; by host glycosylation is found at asparagine 191, asparagine 202, asparagine 235, asparagine 239, asparagine 246, asparagine 267, asparagine 281, asparagine 294, asparagine 300, asparagine 306, asparagine 337, asparagine 344, and asparagine 361. The interval 301–335 (CTRPNNNTRKSIRIQRGPGRAFVTIGKIGNMRQAH) is V3. Cysteine 301 and cysteine 336 are joined by a disulfide. Positions 369–379 (SSGGDPEIVTH) are CD4-binding loop. 2 disulfides stabilise this stretch: cysteine 383–cysteine 450 and cysteine 390–cysteine 423. The V4 stretch occupies residues 390-423 (CNSTQLFNSTWFNSTWSTEGSNNTEGSDTITLPC). N-linked (GlcNAc...) asparagine; by host glycans are attached at residues asparagine 391, asparagine 397, asparagine 402, asparagine 411, asparagine 453, and asparagine 468. V5 regions lie at residues 466-476 (NNNGSEIFRPG) and 468-476 (NGSEIFRPG). The fusion peptide stretch occupies residues 517 to 537 (AVGIGALFLGFLGAAGSTMGA). The segment at 579–597 (KQLQARILAVERYLKDQQL) is immunosuppression. The cysteines at positions 603 and 609 are disulfide-linked. 5 N-linked (GlcNAc...) asparagine; by host glycosylation sites follow: asparagine 616, asparagine 621, asparagine 630, asparagine 642, and asparagine 679. Residues 638–672 (REINNYTSLIHSLIEESQNQQEKNEQELLELDKWA) adopt a coiled-coil conformation. The MPER; binding to GalCer stretch occupies residues 667–688 (ELDKWASLWNWFNITNWLWYIK). A helical transmembrane segment spans residues 690 to 710 (FIMIVGGLVGLRIVFAVLSIV). The Cytoplasmic portion of the chain corresponds to 711 to 861 (NRVRQGYSPL…IRQGLERILL (151 aa)). The YXXL motif; contains endocytosis signal motif lies at 717–720 (YSPL). A disordered region spans residues 723–747 (QTHLPTPRGPDRPEGIEEEGGERDR). 2 S-palmitoyl cysteine; by host lipidation sites follow: cysteine 769 and cysteine 842. The short motif at 860–861 (LL) is the Di-leucine internalization motif element.

Belongs to the HIV-1 env protein family. In terms of assembly, the mature envelope protein (Env) consists of a homotrimer of non-covalently associated gp120-gp41 heterodimers. The resulting complex protrudes from the virus surface as a spike. There seems to be as few as 10 spikes on the average virion. Interacts with host CD4, CCR5 and CXCR4. Gp120 also interacts with the C-type lectins CD209/DC-SIGN and CLEC4M/DC-SIGNR (collectively referred to as DC-SIGN(R)). Gp120 and gp41 interact with GalCer. Gp120 interacts with host ITGA4/ITGB7 complex; on CD4+ T-cells, this interaction results in rapid activation of integrin ITGAL/LFA-1, which facilitates efficient cell-to-cell spreading of HIV-1. Gp120 interacts with cell-associated heparan sulfate; this interaction increases virus infectivity on permissive cells and may be involved in infection of CD4- cells. As to quaternary structure, the mature envelope protein (Env) consists of a homotrimer of non-covalently associated gp120-gp41 heterodimers. The resulting complex protrudes from the virus surface as a spike. There seems to be as few as 10 spikes on the average virion. Post-translationally, highly glycosylated by host. The high number of glycan on the protein is reffered to as 'glycan shield' because it contributes to hide protein sequence from adaptive immune system. In terms of processing, palmitoylation of the transmembrane protein and of Env polyprotein (prior to its proteolytic cleavage) is essential for their association with host cell membrane lipid rafts. Palmitoylation is therefore required for envelope trafficking to classical lipid rafts, but not for viral replication. Specific enzymatic cleavages in vivo yield mature proteins. Envelope glycoproteins are synthesized as an inactive precursor that is heavily N-glycosylated and processed likely by host cell furin in the Golgi to yield the mature SU and TM proteins. The cleavage site between SU and TM requires the minimal sequence [KR]-X-[KR]-R. About 2 of the 9 disulfide bonds of gp41 are reduced by P4HB/PDI, following binding to CD4 receptor.

The protein localises to the virion membrane. It localises to the host cell membrane. The protein resides in the host endosome membrane. In terms of biological role, oligomerizes in the host endoplasmic reticulum into predominantly trimers. In a second time, gp160 transits in the host Golgi, where glycosylation is completed. The precursor is then proteolytically cleaved in the trans-Golgi and thereby activated by cellular furin or furin-like proteases to produce gp120 and gp41. Its function is as follows. Attaches the virus to the host lymphoid cell by binding to the primary receptor CD4. This interaction induces a structural rearrangement creating a high affinity binding site for a chemokine coreceptor like CXCR4 and/or CCR5. Acts as a ligand for CD209/DC-SIGN and CLEC4M/DC-SIGNR, which are respectively found on dendritic cells (DCs), and on endothelial cells of liver sinusoids and lymph node sinuses. These interactions allow capture of viral particles at mucosal surfaces by these cells and subsequent transmission to permissive cells. HIV subverts the migration properties of dendritic cells to gain access to CD4+ T-cells in lymph nodes. Virus transmission to permissive T-cells occurs either in trans (without DCs infection, through viral capture and transmission), or in cis (following DCs productive infection, through the usual CD4-gp120 interaction), thereby inducing a robust infection. In trans infection, bound virions remain infectious over days and it is proposed that they are not degraded, but protected in non-lysosomal acidic organelles within the DCs close to the cell membrane thus contributing to the viral infectious potential during DCs' migration from the periphery to the lymphoid tissues. On arrival at lymphoid tissues, intact virions recycle back to DCs' cell surface allowing virus transmission to CD4+ T-cells. Functionally, acts as a class I viral fusion protein. Under the current model, the protein has at least 3 conformational states: pre-fusion native state, pre-hairpin intermediate state, and post-fusion hairpin state. During fusion of viral and target intracellular membranes, the coiled coil regions (heptad repeats) assume a trimer-of-hairpins structure, positioning the fusion peptide in close proximity to the C-terminal region of the ectodomain. The formation of this structure appears to drive apposition and subsequent fusion of viral and target cell membranes. Complete fusion occurs in host cell endosomes and is dynamin-dependent, however some lipid transfer might occur at the plasma membrane. The virus undergoes clathrin-dependent internalization long before endosomal fusion, thus minimizing the surface exposure of conserved viral epitopes during fusion and reducing the efficacy of inhibitors targeting these epitopes. Membranes fusion leads to delivery of the nucleocapsid into the cytoplasm. In Homo sapiens (Human), this protein is Envelope glycoprotein gp160.